Here is a 356-residue protein sequence, read N- to C-terminus: Holliday junction branch migration complex subunit RuvB (356 aa).

Residues 13-197 form a large ATPase domain (RuvB-L) region; the sequence is LPPARRMLSA…FGIVARLEFY (185 aa). Residues Leu-36, Arg-37, Gly-78, Lys-81, Thr-82, Thr-83, 144–146, Arg-187, Tyr-197, and Arg-234 contribute to the ATP site; that span reads EDY. Residue Thr-82 coordinates Mg(2+). Residues 198–268 are small ATPAse domain (RuvB-S); that stretch reads TPEELARIVK…IANRALAMLD (71 aa). Residues 271–356 form a head domain (RuvB-H) region; it reads PQGFDLMDRK…RGNAENLFEE (86 aa). 2 residues coordinate DNA: Arg-326 and Arg-331.

It belongs to the RuvB family. As to quaternary structure, homohexamer. Forms an RuvA(8)-RuvB(12)-Holliday junction (HJ) complex. HJ DNA is sandwiched between 2 RuvA tetramers; dsDNA enters through RuvA and exits via RuvB. An RuvB hexamer assembles on each DNA strand where it exits the tetramer. Each RuvB hexamer is contacted by two RuvA subunits (via domain III) on 2 adjacent RuvB subunits; this complex drives branch migration. In the full resolvosome a probable DNA-RuvA(4)-RuvB(12)-RuvC(2) complex forms which resolves the HJ.

Its subcellular location is the cytoplasm. It catalyses the reaction ATP + H2O = ADP + phosphate + H(+). The RuvA-RuvB-RuvC complex processes Holliday junction (HJ) DNA during genetic recombination and DNA repair, while the RuvA-RuvB complex plays an important role in the rescue of blocked DNA replication forks via replication fork reversal (RFR). RuvA specifically binds to HJ cruciform DNA, conferring on it an open structure. The RuvB hexamer acts as an ATP-dependent pump, pulling dsDNA into and through the RuvAB complex. RuvB forms 2 homohexamers on either side of HJ DNA bound by 1 or 2 RuvA tetramers; 4 subunits per hexamer contact DNA at a time. Coordinated motions by a converter formed by DNA-disengaged RuvB subunits stimulates ATP hydrolysis and nucleotide exchange. Immobilization of the converter enables RuvB to convert the ATP-contained energy into a lever motion, pulling 2 nucleotides of DNA out of the RuvA tetramer per ATP hydrolyzed, thus driving DNA branch migration. The RuvB motors rotate together with the DNA substrate, which together with the progressing nucleotide cycle form the mechanistic basis for DNA recombination by continuous HJ branch migration. Branch migration allows RuvC to scan DNA until it finds its consensus sequence, where it cleaves and resolves cruciform DNA. This Polaromonas naphthalenivorans (strain CJ2) protein is Holliday junction branch migration complex subunit RuvB.